The chain runs to 379 residues: Queuine tRNA-ribosyltransferase (379 aa).

The Proton acceptor role is filled by Asp-94. Residues 94-98 (DSGGF), Asp-148, Gln-191, and Gly-218 contribute to the substrate site. Positions 249-255 (GVGSPDS) are RNA binding. Residue Asp-268 is the Nucleophile of the active site. Residues 273–277 (TRIAR) form an RNA binding; important for wobble base 34 recognition region. The Zn(2+) site is built by Cys-306, Cys-308, Cys-311, and His-337.

The protein belongs to the queuine tRNA-ribosyltransferase family. In terms of assembly, homodimer. Within each dimer, one monomer is responsible for RNA recognition and catalysis, while the other monomer binds to the replacement base PreQ1. Zn(2+) is required as a cofactor.

It carries out the reaction 7-aminomethyl-7-carbaguanine + guanosine(34) in tRNA = 7-aminomethyl-7-carbaguanosine(34) in tRNA + guanine. Its pathway is tRNA modification; tRNA-queuosine biosynthesis. Catalyzes the base-exchange of a guanine (G) residue with the queuine precursor 7-aminomethyl-7-deazaguanine (PreQ1) at position 34 (anticodon wobble position) in tRNAs with GU(N) anticodons (tRNA-Asp, -Asn, -His and -Tyr). Catalysis occurs through a double-displacement mechanism. The nucleophile active site attacks the C1' of nucleotide 34 to detach the guanine base from the RNA, forming a covalent enzyme-RNA intermediate. The proton acceptor active site deprotonates the incoming PreQ1, allowing a nucleophilic attack on the C1' of the ribose to form the product. After dissociation, two additional enzymatic reactions on the tRNA convert PreQ1 to queuine (Q), resulting in the hypermodified nucleoside queuosine (7-(((4,5-cis-dihydroxy-2-cyclopenten-1-yl)amino)methyl)-7-deazaguanosine). This chain is Queuine tRNA-ribosyltransferase, found in Halalkalibacterium halodurans (strain ATCC BAA-125 / DSM 18197 / FERM 7344 / JCM 9153 / C-125) (Bacillus halodurans).